The chain runs to 50 residues: Ribosome-inactivating protein lyophyllin (50 aa).

It carries out the reaction Endohydrolysis of the N-glycosidic bond at one specific adenosine on the 28S rRNA.. N-glycosylase that inhibits protein synthesis by depurinating ribosomal rRNA, and thus acts as a ribosomal inactivating protein (RIP). Has adenine polynucleotide glycosidase activity on the poly(A) substrate A30-ssDNA. Inhibits cell-free translation in rabbit reticulocyte lysate system with an IC(50) of 1 nM. May function in the defense response to pathogens. Displays antifungal activity against C.comatus and P.piricola, but not against R.solani, M.arachidicola and C.gossypii. Inhibits mycelial growth in P.piricola with an IC(50) of 2.5 uM. Has cytotoxic activity against the human cancer cell lines Hela, HepG2, and JAR, with IC(50) of 358.8, 489.8, and 926.9 nM respectively. It also inhibits HIV-1 reverse transcriptase activity (IC(50)=7.9 nM) and disrupts mouse embryonic development. The sequence is that of Ribosome-inactivating protein lyophyllin from Lyophyllum shimeji (Hon-shimeji).